The chain runs to 272 residues: Cell shape-determining protein MreC (272 aa).

At 1 to 8 (MNRFKKSK) the chain is on the cytoplasmic side. A helical membrane pass occupies residues 9-29 (YVIIVFVTVLLVSALLATTYS). At 30-272 (STIVTKLGDG…VDVIELVGNS (243 aa)) the chain is on the extracellular side. Residues 64–112 (LTRTYNENESLKKQLYQLEVKSNEVESLKTENEQLRQLLDMKSKLQATK) are a coiled coil.

Belongs to the MreC family. Homodimer. Interacts with a number of proteins in the elongasome, including PBP1a (pbpA), PBP1b, PBP2a, PBP2b (penA), StkP, MltG, MreD and RodZ.

The protein resides in the cell membrane. In terms of biological role, involved in formation and maintenance of cell shape, probably part of the elongasome which synthesizes peripheral peptidoglycan (PG). This is Cell shape-determining protein MreC from Streptococcus pneumoniae (strain ATCC BAA-255 / R6).